The primary structure comprises 465 residues: Ribulose bisphosphate carboxylase large chain (465 aa).

At K4 the chain carries N6,N6,N6-trimethyllysine. The substrate site is built by N113 and T163. The Proton acceptor role is filled by K165. Residue K167 coordinates substrate. The Mg(2+) site is built by K191, D193, and E194. Residue K191 is modified to N6-carboxylysine. Residue H284 is the Proton acceptor of the active site. The substrate site is built by R285, H317, and S369.

The protein belongs to the RuBisCO large chain family. Type I subfamily. Heterohexadecamer of 8 large chains and 8 small chains; disulfide-linked. The disulfide link is formed within the large subunit homodimers. Mg(2+) serves as cofactor. Post-translationally, the disulfide bond which can form in the large chain dimeric partners within the hexadecamer appears to be associated with oxidative stress and protein turnover.

The protein localises to the plastid. The protein resides in the chloroplast. The catalysed reaction is 2 (2R)-3-phosphoglycerate + 2 H(+) = D-ribulose 1,5-bisphosphate + CO2 + H2O. It carries out the reaction D-ribulose 1,5-bisphosphate + O2 = 2-phosphoglycolate + (2R)-3-phosphoglycerate + 2 H(+). Functionally, ruBisCO catalyzes two reactions: the carboxylation of D-ribulose 1,5-bisphosphate, the primary event in carbon dioxide fixation, as well as the oxidative fragmentation of the pentose substrate in the photorespiration process. Both reactions occur simultaneously and in competition at the same active site. This chain is Ribulose bisphosphate carboxylase large chain, found in Casuarina equisetifolia (Beach she-oak).